We begin with the raw amino-acid sequence, 491 residues long: NADH-ubiquinone oxidoreductase chain 2 (491 aa).

14 helical membrane-spanning segments follow: residues M11–I31, V38–I58, E74–F94, I106–E126, N129–L149, L161–I181, I210–L230, G238–I258, A270–I290, L298–A318, V330–F350, G375–F395, V411–K433, and I463–V483.

It belongs to the complex I subunit 2 family.

It is found in the mitochondrion inner membrane. It catalyses the reaction a ubiquinone + NADH + 5 H(+)(in) = a ubiquinol + NAD(+) + 4 H(+)(out). Its function is as follows. Core subunit of the mitochondrial membrane respiratory chain NADH dehydrogenase (Complex I) that is believed to belong to the minimal assembly required for catalysis. Complex I functions in the transfer of electrons from NADH to the respiratory chain. The immediate electron acceptor for the enzyme is believed to be ubiquinone. The polypeptide is NADH-ubiquinone oxidoreductase chain 2 (nad2) (Dictyostelium citrinum (Slime mold)).